A 283-amino-acid chain; its full sequence is Thymidylate synthase (283 aa).

Arg22 contacts dUMP. Cys160 serves as the catalytic Nucleophile. Residues 180 to 183, Asn191, and 221 to 223 each bind dUMP; these read RSCD and HIY. Residue Asp183 coordinates (6R)-5,10-methylene-5,6,7,8-tetrahydrofolate. Position 282 (Ser282) interacts with (6R)-5,10-methylene-5,6,7,8-tetrahydrofolate.

It belongs to the thymidylate synthase family. Bacterial-type ThyA subfamily. As to quaternary structure, homodimer.

Its subcellular location is the cytoplasm. It carries out the reaction dUMP + (6R)-5,10-methylene-5,6,7,8-tetrahydrofolate = 7,8-dihydrofolate + dTMP. Its pathway is pyrimidine metabolism; dTTP biosynthesis. Functionally, catalyzes the reductive methylation of 2'-deoxyuridine-5'-monophosphate (dUMP) to 2'-deoxythymidine-5'-monophosphate (dTMP) while utilizing 5,10-methylenetetrahydrofolate (mTHF) as the methyl donor and reductant in the reaction, yielding dihydrofolate (DHF) as a by-product. This enzymatic reaction provides an intracellular de novo source of dTMP, an essential precursor for DNA biosynthesis. This is Thymidylate synthase from Aliivibrio fischeri (strain ATCC 700601 / ES114) (Vibrio fischeri).